The following is a 430-amino-acid chain: Dihydrolipoyllysine-residue acetyltransferase component of pyruvate dehydrogenase complex (430 aa).

The Lipoyl-binding domain occupies 2 to 77; it reads AFEFRLPDIG…VVGDVIVKID (76 aa). K43 bears the N6-lipoyllysine mark. Positions 80-122 are disordered; sequence DAEDMQFKGHDDDSSSKEEPAKEEAPAEQAPVATQTEEVDENR. Residues 84-104 are compositionally biased toward basic and acidic residues; it reads MQFKGHDDDSSSKEEPAKEEA. Positions 125–162 constitute a Peripheral subunit-binding (PSBD) domain; it reads KAMPSVRKYAREKGVNIKAVSGSGKNGRITKEDVDAYL. The disordered stretch occupies residues 164–199; sequence GGAPTASNESAASATSEEVAETPAAPAAVSLEGDFP. A compositionally biased stretch (low complexity) spans 166-193; sequence APTASNESAASATSEEVAETPAAPAAVS. H401 is a catalytic residue.

This sequence belongs to the 2-oxoacid dehydrogenase family. As to quaternary structure, forms a 24-polypeptide structural core with octahedral symmetry. It depends on (R)-lipoate as a cofactor.

It catalyses the reaction N(6)-[(R)-dihydrolipoyl]-L-lysyl-[protein] + acetyl-CoA = N(6)-[(R)-S(8)-acetyldihydrolipoyl]-L-lysyl-[protein] + CoA. Its function is as follows. The pyruvate dehydrogenase complex catalyzes the overall conversion of pyruvate to acetyl-CoA and CO(2). It contains multiple copies of three enzymatic components: pyruvate dehydrogenase (E1), dihydrolipoamide acetyltransferase (E2) and lipoamide dehydrogenase (E3). In Staphylococcus aureus (strain Mu50 / ATCC 700699), this protein is Dihydrolipoyllysine-residue acetyltransferase component of pyruvate dehydrogenase complex (pdhC).